A 100-amino-acid polypeptide reads, in one-letter code: NADH-quinone oxidoreductase subunit K (100 aa).

A run of 3 helical transmembrane segments spans residues 4-24 (LSNY…GVLT), 29-49 (IVVF…FVAF), and 60-80 (IFVF…LALF).

This sequence belongs to the complex I subunit 4L family. NDH-1 is composed of 14 different subunits. Subunits NuoA, H, J, K, L, M, N constitute the membrane sector of the complex.

It localises to the cell inner membrane. The enzyme catalyses a quinone + NADH + 5 H(+)(in) = a quinol + NAD(+) + 4 H(+)(out). Its function is as follows. NDH-1 shuttles electrons from NADH, via FMN and iron-sulfur (Fe-S) centers, to quinones in the respiratory chain. The immediate electron acceptor for the enzyme in this species is believed to be ubiquinone. Couples the redox reaction to proton translocation (for every two electrons transferred, four hydrogen ions are translocated across the cytoplasmic membrane), and thus conserves the redox energy in a proton gradient. The sequence is that of NADH-quinone oxidoreductase subunit K from Trichlorobacter lovleyi (strain ATCC BAA-1151 / DSM 17278 / SZ) (Geobacter lovleyi).